The chain runs to 358 residues: Chorismate synthase (358 aa).

The segment at 39 to 61 (ADIQPFLDKRRPGQSRHTTQRQE) is disordered. Residues Arg-48 and Arg-54 each contribute to the NADP(+) site. Residues 125-127 (RSS), 237-238 (NA), Gly-284, 299-303 (KPTSS), and Arg-325 each bind FMN.

This sequence belongs to the chorismate synthase family. Homotetramer. FMNH2 serves as cofactor.

It catalyses the reaction 5-O-(1-carboxyvinyl)-3-phosphoshikimate = chorismate + phosphate. It participates in metabolic intermediate biosynthesis; chorismate biosynthesis; chorismate from D-erythrose 4-phosphate and phosphoenolpyruvate: step 7/7. In terms of biological role, catalyzes the anti-1,4-elimination of the C-3 phosphate and the C-6 proR hydrogen from 5-enolpyruvylshikimate-3-phosphate (EPSP) to yield chorismate, which is the branch point compound that serves as the starting substrate for the three terminal pathways of aromatic amino acid biosynthesis. This reaction introduces a second double bond into the aromatic ring system. In Sphingopyxis alaskensis (strain DSM 13593 / LMG 18877 / RB2256) (Sphingomonas alaskensis), this protein is Chorismate synthase.